The sequence spans 415 residues: MFS-type transporter FVEG_12626 (415 aa).

Residues 1-18 (MDPDTEQMRVEKPNHEQP) are compositionally biased toward basic and acidic residues. The tract at residues 1 to 22 (MDPDTEQMRVEKPNHEQPKPNT) is disordered. The next 6 membrane-spanning stretches (helical) occupy residues 27-47 (GGFK…VGVF), 63-83 (TVSW…PFVG), 93-113 (YLLL…SISS), 118-138 (YILS…YPSF), 151-171 (LALG…PIVV), and 178-198 (IGFG…LLVT). N-linked (GlcNAc...) asparagine glycosylation occurs at Asn199. Helical transmembrane passes span 227-247 (FILT…PITF), 264-284 (YLVS…GYIA), 290-310 (FNVS…LWLP), 318-338 (IAFA…SPAL), 354-374 (TMYA…GALI), and 386-406 (VFAG…RLYI).

It belongs to the major facilitator superfamily. Monocarboxylate porter (TC 2.A.1.13) family.

Its subcellular location is the membrane. Its function is as follows. MFS-type transporter; part of the Fusarium detoxification of benzoxazolinone cluster 2 (FDB2) involved in the degradation of benzoxazolinones produced by the host plant. Maize, wheat, and rye produce the 2 benzoxazinone phytoanticipins 2,4-dihy-droxy-7-methoxy-1,4-benzoxazin-3-one (DIMBOA) and 2,4-dihydroxy-1,4-benzoxazin-3-one (DIBOA) that, due to their inherent instability once released, spontaneously degrade to the more stable corresponding benzoxazolinones, 6-methoxy-2-benzoxazolinone (MBOA) and 2-benzoxazolinone (BOA), respectively. This is MFS-type transporter FVEG_12626 from Gibberella moniliformis (strain M3125 / FGSC 7600) (Maize ear and stalk rot fungus).